The sequence spans 900 residues: Alanine--tRNA ligase (900 aa).

H604, H608, C708, and H712 together coordinate Zn(2+).

It belongs to the class-II aminoacyl-tRNA synthetase family. Requires Zn(2+) as cofactor.

It is found in the cytoplasm. It carries out the reaction tRNA(Ala) + L-alanine + ATP = L-alanyl-tRNA(Ala) + AMP + diphosphate. Catalyzes the attachment of alanine to tRNA(Ala) in a two-step reaction: alanine is first activated by ATP to form Ala-AMP and then transferred to the acceptor end of tRNA(Ala). Also edits incorrectly charged Ser-tRNA(Ala) and Gly-tRNA(Ala) via its editing domain. The protein is Alanine--tRNA ligase of Saccharolobus islandicus (strain M.16.27) (Sulfolobus islandicus).